Reading from the N-terminus, the 168-residue chain is MPRSRINGNFIDKTFSIVADILLRVIPTTSGEKEAFTYYRDGMSAQSEGNYAEALQNYYEAMRLEIDPYDRSYILYNIGLIHTSNGEHTKALEYYFRALERNPFLPQAFNNMAVICHYRGEQAIQQGDSEIAEAWFDQAAEYWKQAIALTPGNYIEARNWLKITRRFE.

TPR repeat units lie at residues 35 to 68 (AFTY…EIDP), 72 to 105 (SYIL…NPFL), and 120 to 153 (GEQA…TPGN).

This sequence belongs to the Ycf3 family.

Its subcellular location is the plastid. The protein resides in the chloroplast thylakoid membrane. Essential for the assembly of the photosystem I (PSI) complex. May act as a chaperone-like factor to guide the assembly of the PSI subunits. This Solanum lycopersicum (Tomato) protein is Photosystem I assembly protein Ycf3.